The chain runs to 2298 residues: Protein Ycf2 (2298 aa).

1638-1645 (GSIGTGRS) contributes to the ATP binding site.

Belongs to the Ycf2 family.

The protein resides in the plastid. It is found in the chloroplast stroma. In terms of biological role, probable ATPase of unknown function. Its presence in a non-photosynthetic plant (Epifagus virginiana) and experiments in tobacco indicate that it has an essential function which is probably not related to photosynthesis. This chain is Protein Ycf2, found in Gossypium barbadense (Sea Island cotton).